The sequence spans 155 residues: DNA gyrase inhibitor (155 aa).

This sequence belongs to the DNA gyrase inhibitor family. Interacts with DNA gyrase.

It is found in the cytoplasm. In terms of biological role, inhibits the supercoiling activity of DNA gyrase. Acts by inhibiting DNA gyrase at an early step, prior to (or at the step of) binding of DNA by the gyrase. It protects cells against toxins that target DNA gyrase, by inhibiting activity of these toxins and reducing the formation of lethal double-strand breaks in the cell. The chain is DNA gyrase inhibitor from Citrobacter koseri (strain ATCC BAA-895 / CDC 4225-83 / SGSC4696).